We begin with the raw amino-acid sequence, 305 residues long: MTAQLSYVEAVVVGAFQGVTELFPVSSLGHAVLVPALVGGRWAQDLSVSAHRSPYLAFIVGLHVATAAALLVFFWRDWVRILAGFFSSLRHRRIRTPDERLAWLIVVGTIPVGLAGLALEQLFRTTLGKPVPAAAFLLLNSVALYAGEVLRRRVAPVADEPAVPDAEQQHGDEASDNRLAQLPLRRGVLIGAAQILALLPGISRSGITIVAGLWRGLSHEDAARFSFLLATPIILAAGVYKIPELFGPLGAGIGGQVLAGSIASFVCAYLAVRYLTRYFQTRTLTPFAIYCAVAGGASLVWLALR.

The next 8 helical transmembrane spans lie at 18–38, 55–75, 103–123, 130–150, 187–207, 225–245, 246–266, and 284–304; these read GVTE…PALV, YLAF…VFFW, WLIV…EQLF, PVPA…GEVL, GVLI…RSGI, FSFL…IPEL, FGPL…ASFV, and LTPF…WLAL.

This sequence belongs to the UppP family.

The protein resides in the cell membrane. It catalyses the reaction di-trans,octa-cis-undecaprenyl diphosphate + H2O = di-trans,octa-cis-undecaprenyl phosphate + phosphate + H(+). Functionally, catalyzes the dephosphorylation of undecaprenyl diphosphate (UPP). Confers resistance to bacitracin. In Mycobacterium avium (strain 104), this protein is Undecaprenyl-diphosphatase.